The sequence spans 73 residues: MGSFSIWHWLIVLVIVMLVFGTKKLRNIGQDLGGAVKGFKDGMKEGDDKAAPAKELRDSTTIDVDAKEKTRQQ.

The helical transmembrane segment at 1–21 (MGSFSIWHWLIVLVIVMLVFG) threads the bilayer. Residues 43–73 (MKEGDDKAAPAKELRDSTTIDVDAKEKTRQQ) are disordered.

Belongs to the TatA/E family. The Tat system comprises two distinct complexes: a TatABC complex, containing multiple copies of TatA, TatB and TatC subunits, and a separate TatA complex, containing only TatA subunits. Substrates initially bind to the TatABC complex, which probably triggers association of the separate TatA complex to form the active translocon.

It localises to the cell inner membrane. In terms of biological role, part of the twin-arginine translocation (Tat) system that transports large folded proteins containing a characteristic twin-arginine motif in their signal peptide across membranes. TatA could form the protein-conducting channel of the Tat system. The chain is Sec-independent protein translocase protein TatA from Cupriavidus pinatubonensis (strain JMP 134 / LMG 1197) (Cupriavidus necator (strain JMP 134)).